Here is a 107-residue protein sequence, read N- to C-terminus: Replication initiation control protein YabA (107 aa).

Residues H81, C83, C97, and C100 each coordinate Zn(2+).

Belongs to the YabA family. In terms of assembly, homotetramer. Interacts with both DnaA and DnaN, acting as a bridge between these two proteins. The cofactor is Zn(2+).

It is found in the cytoplasm. The protein resides in the nucleoid. In terms of biological role, involved in control of chromosome replication initiation. Inhibits the cooperative binding of DnaA to the oriC region, thus negatively regulating initiation of chromosome replication. Inhibits the ability of DnaA-ATP to form a helix on DNA; does not disassemble preformed DnaA-DNA helices. Decreases the residence time of DnaA on the chromosome at its binding sites (oriC, replication forks and promoter-binding sites). Tethers DnaA to the replication machinery via the DNA polymerase beta sliding clamp subunit (dnaN). Associates with oriC and other DnaA targets on the chromosome in a DnaA-dependent manner. The polypeptide is Replication initiation control protein YabA (Streptococcus equi subsp. zooepidemicus (strain MGCS10565)).